The following is a 175-amino-acid chain: MIDDDGYRPNVGIVICNRQGEVLWARRYGQHSWQFPQGGINPGETPEQAMYRELFEEVGLNKKDVRILASTRNWLRYKLPKRLVRWDTKPVCIGQKQRWFLLQLMCNEADINMQRSSTPEFDGWRWVSYWYPVRQVVSFKRDVYRRVMKEFAPTVMPVQEAAPPRVPPAYRRKRG.

The 144-residue stretch at 6 to 149 folds into the Nudix hydrolase domain; it reads GYRPNVGIVI…KRDVYRRVMK (144 aa). Positions 38 to 59 match the Nudix box motif; it reads GGINPGETPEQAMYRELFEEVG.

It belongs to the Nudix hydrolase family. RppH subfamily. A divalent metal cation serves as cofactor.

Its function is as follows. Accelerates the degradation of transcripts by removing pyrophosphate from the 5'-end of triphosphorylated RNA, leading to a more labile monophosphorylated state that can stimulate subsequent ribonuclease cleavage. The sequence is that of RNA pyrophosphohydrolase from Yersinia enterocolitica serotype O:8 / biotype 1B (strain NCTC 13174 / 8081).